The sequence spans 1497 residues: DNA-directed RNA polymerase subunit beta (1497 aa).

It belongs to the RNA polymerase beta chain family. In terms of assembly, the RNAP catalytic core consists of 2 alpha, 1 beta, 1 beta' and 1 omega subunit. When a sigma factor is associated with the core the holoenzyme is formed, which can initiate transcription.

The enzyme catalyses RNA(n) + a ribonucleoside 5'-triphosphate = RNA(n+1) + diphosphate. In terms of biological role, DNA-dependent RNA polymerase catalyzes the transcription of DNA into RNA using the four ribonucleoside triphosphates as substrates. The polypeptide is DNA-directed RNA polymerase subunit beta (Trichlorobacter lovleyi (strain ATCC BAA-1151 / DSM 17278 / SZ) (Geobacter lovleyi)).